A 107-amino-acid polypeptide reads, in one-letter code: Ferredoxin (107 aa).

The propeptide occupies 1–8; the sequence is MVSGVSRN. Residues cysteine 45, cysteine 51, and cysteine 54 each coordinate [2Fe-2S] cluster.

Requires [2Fe-2S] cluster as cofactor.

It is found in the hydrogenosome. Its function is as follows. Ferredoxins are iron-sulfur proteins that transfer electrons in a wide variety of metabolic reactions. This Psalteriomonas lanterna (Amoeboflagellate) protein is Ferredoxin.